We begin with the raw amino-acid sequence, 139 residues long: Maximins 4/H3 type 7 (139 aa).

The first 18 residues, 1-18 (MNFKYIVAVSFLIASAYA), serve as a signal peptide directing secretion. Residues 19 to 43 (RSVQNDEQSLSQRDVLEEESLREIR) constitute a propeptide that is removed on maturation. Asn70 is subject to Asparagine amide. Residues 74 to 118 (TAEDHEVMKRLEAIMRDLDSLDYPEEASERETRGFNQDEIAKEKR) constitute a propeptide that is removed on maturation. Ile138 is subject to Isoleucine amide.

Belongs to the bombinin family. In terms of tissue distribution, expressed by the skin glands.

The protein resides in the secreted. Functionally, maximin-4 shows antibacterial activity against both Gram-positive and Gram-negative bacteria. It also shows antimicrobial activity against the fungus C.albicans, but not against A.flavus nor P.uticale. It has little hemolytic activity. It does not possess a significant cytotoxicity against tumor cell lines. It does not possess a significant anti-HIV activity. Maximin-H3 shows antibacterial activity against both Gram-positive and Gram-negative bacteria. It also shows antimicrobial activity against the fungus C.albicans. Shows strong hemolytic activity. The protein is Maximins 4/H3 type 7 of Bombina maxima (Giant fire-bellied toad).